We begin with the raw amino-acid sequence, 4146 residues long: DNA-dependent protein kinase catalytic subunit (4146 aa).

HEAT repeat units lie at residues 308–343 (DDYQ…LKQI), 925–962 (VIYL…VAFM), 1026–1062 (QDTV…LRWS), and 1075–1111 (PVNT…YRDF). 2 TPR repeats span residues 1745–1778 (PMKS…SQSP) and 1974–2007 (VFSE…QRNY). Residue serine 2075 is modified to Phosphoserine; by autocatalysis. Threonine 2631 carries the phosphothreonine; by autocatalysis modification. Position 2634 is a phosphoserine; by autocatalysis (serine 2634). Phosphothreonine; by autocatalysis is present on residues threonine 2659 and threonine 2668. Residues 2873 to 3556 (FIACVQDMCY…VYPFMVSGES (684 aa)) enclose the FAT domain. Residues 3739–4071 (FDERVSVMAS…IHCAKRKLDG (333 aa)) form the PI3K/PI4K catalytic domain. Positions 3745 to 3751 (VMASIRK) are G-loop. Positions 3937-3945 (GIGDRHLSN) are catalytic loop. The interval 3957-3982 (GIDFGHAFGTATQFLPVPELMPFRLT) is activation loop. Positions 4114–4146 (DGLTEETQVQCLIDQATDPNILGRVWKGWEPWI) constitute an FATC domain.

It belongs to the PI3/PI4-kinase family. DNA-PK is a heterotrimer of prkdc and the Ku dimer (composed of xrcc6/Ku70 and xrcc5/Ku86). Component of the core long-range non-homologous end joining (NHEJ) complex (also named DNA-PK complex) composed of prkdc, lig4, xrcc4, xrcc6/ku70, xrcc5/ku86 and nhej1/xlf. Additional component of the NHEJ complex includes paxx. Following autophosphorylation, prkdc dissociates from DNA. Autophosphorylated at two clusters, the T2609 cluster and the S2056 cluster. Autophosphorylated on Ser-2075, Thr-2631, Thr-2659 and Thr-2668. Ser-2075 and Thr-2668 are DNA damage-inducible phosphorylation sites (inducible with ionizing radiation, IR) dephosphorylated by PPP5C. Autophosphorylation induces a conformational change that leads to remodeling of the DNA-PK complex, requisite for efficient end processing and DNA repair. Autophosphorylation in trans within DNA-PK complexes loaded on DNA ends leads to the dissociation of PRKDC from DNA and the transition into the short-range NHEJ complex. Autophosphorylation of the T2609 cluster is required for hematopoietic development and protein synthesis in erythrocytes precursors.

It is found in the nucleus. It localises to the nucleolus. The enzyme catalyses L-seryl-[protein] + ATP = O-phospho-L-seryl-[protein] + ADP + H(+). The catalysed reaction is L-threonyl-[protein] + ATP = O-phospho-L-threonyl-[protein] + ADP + H(+). Functionally, serine/threonine-protein kinase that acts as a molecular sensor for DNA damage. Involved in DNA nonhomologous end joining (NHEJ) required for double-strand break (DSB) repair and V(D)J recombination. Must be bound to DNA to express its catalytic properties. Promotes processing of hairpin DNA structures in V(D)J recombination by activation of the hairpin endonuclease artemis (DCLRE1C). Recruited by XRCC5 and XRCC6 to DNA ends and is required to (1) protect and align broken ends of DNA, thereby preventing their degradation, (2) and sequester the DSB for repair by NHEJ. Acts as a scaffold protein to aid the localization of DNA repair proteins to the site of damage. The assembly of the DNA-PK complex at DNA ends is also required for the NHEJ ligation step. Found at the ends of chromosomes, suggesting a further role in the maintenance of telomeric stability and the prevention of chromosomal end fusion. As part of the DNA-PK complex, involved in the early steps of ribosome assembly by promoting the processing of precursor rRNA into mature 18S rRNA in the small-subunit processome. Recognizes the substrate consensus sequence [ST]-Q. Phosphorylates 'Ser-139' of histone variant H2AX, thereby regulating DNA damage response mechanism. This Xenopus laevis (African clawed frog) protein is DNA-dependent protein kinase catalytic subunit (prkdc).